Here is a 139-residue protein sequence, read N- to C-terminus: uncharacterized protein (139 aa).

An N-terminal signal peptide occupies residues Met1–Gly32. In terms of domain architecture, sHSP spans Ser44–Glu139.

This sequence belongs to the small heat shock protein (HSP20) family.

This is an uncharacterized protein from Bacillus subtilis (strain 168).